Here is a 220-residue protein sequence, read N- to C-terminus: Ribonuclease HII (220 aa).

An RNase H type-2 domain is found at 32–220 (KHIAGIDEAG…FAPIKGCFDC (189 aa)). Residues aspartate 38, glutamate 39, and aspartate 130 each contribute to the a divalent metal cation site.

It belongs to the RNase HII family. The cofactor is Mn(2+). Mg(2+) serves as cofactor.

Its subcellular location is the cytoplasm. The enzyme catalyses Endonucleolytic cleavage to 5'-phosphomonoester.. Endonuclease that specifically degrades the RNA of RNA-DNA hybrids. This chain is Ribonuclease HII, found in Brucella abortus (strain 2308).